Here is a 99-residue protein sequence, read N- to C-terminus: Cytochrome c oxidase subunit 4 isoform 1, mitochondrial (99 aa).

The Mitochondrial matrix portion of the chain corresponds to 1-73 (SVVKSEDFTL…SFAEMNRRSN (73 aa)). An N6-acetyllysine; alternate modification is found at Lys4. Lys4 bears the N6-succinyllysine; alternate mark. Lys28 carries the N6-acetyllysine modification. Residues Ser31 and Ser33 each carry the phosphoserine modification. Lys35 is modified (N6-acetyllysine; alternate). The residue at position 35 (Lys35) is an N6-succinyllysine; alternate. Position 42 is an N6-acetyllysine (Lys42). A helical transmembrane segment spans residues 74–99 (EWKTVVGTAMFFIGITALVIMWEKLY).

The protein belongs to the cytochrome c oxidase IV family. In terms of assembly, component of the cytochrome c oxidase (complex IV, CIV), a multisubunit enzyme composed of 14 subunits. The complex is composed of a catalytic core of 3 subunits MT-CO1, MT-CO2 and MT-CO3, encoded in the mitochondrial DNA, and 11 supernumerary subunits COX4I, COX5A, COX5B, COX6A, COX6B, COX6C, COX7A, COX7B, COX7C, COX8 and NDUFA4, which are encoded in the nuclear genome. The complex exists as a monomer or a dimer and forms supercomplexes (SCs) in the inner mitochondrial membrane with NADH-ubiquinone oxidoreductase (complex I, CI) and ubiquinol-cytochrome c oxidoreductase (cytochrome b-c1 complex, complex III, CIII), resulting in different assemblies (supercomplex SCI(1)III(2)IV(1) and megacomplex MCI(2)III(2)IV(2)). Interacts with PHB2; the interaction decreases in absence of SPHK2. Interacts with AFG1L. Interacts with ABCB7; this interaction allows the regulation of cellular iron homeostasis and cellular reactive oxygen species (ROS) levels in cardiomyocytes. Interacts with FLVCR2; this interaction occurs in the absence of heme and is disrupted upon heme binding. Interacts with IRGC.

The protein resides in the mitochondrion inner membrane. It participates in energy metabolism; oxidative phosphorylation. In terms of biological role, component of the cytochrome c oxidase, the last enzyme in the mitochondrial electron transport chain which drives oxidative phosphorylation. The respiratory chain contains 3 multisubunit complexes succinate dehydrogenase (complex II, CII), ubiquinol-cytochrome c oxidoreductase (cytochrome b-c1 complex, complex III, CIII) and cytochrome c oxidase (complex IV, CIV), that cooperate to transfer electrons derived from NADH and succinate to molecular oxygen, creating an electrochemical gradient over the inner membrane that drives transmembrane transport and the ATP synthase. Cytochrome c oxidase is the component of the respiratory chain that catalyzes the reduction of oxygen to water. Electrons originating from reduced cytochrome c in the intermembrane space (IMS) are transferred via the dinuclear copper A center (CU(A)) of subunit 2 and heme A of subunit 1 to the active site in subunit 1, a binuclear center (BNC) formed by heme A3 and copper B (CU(B)). The BNC reduces molecular oxygen to 2 water molecules using 4 electrons from cytochrome c in the IMS and 4 protons from the mitochondrial matrix. In Mandrillus sphinx (Mandrill), this protein is Cytochrome c oxidase subunit 4 isoform 1, mitochondrial (COX4I1).